A 750-amino-acid chain; its full sequence is Ribosomal RNA large subunit methyltransferase K/L (750 aa).

Residues 46–157 (TAYRLCLWSR…RGEAILSLDL (112 aa)) form the THUMP domain.

Belongs to the methyltransferase superfamily. RlmKL family.

The protein localises to the cytoplasm. It carries out the reaction guanosine(2445) in 23S rRNA + S-adenosyl-L-methionine = N(2)-methylguanosine(2445) in 23S rRNA + S-adenosyl-L-homocysteine + H(+). The enzyme catalyses guanosine(2069) in 23S rRNA + S-adenosyl-L-methionine = N(2)-methylguanosine(2069) in 23S rRNA + S-adenosyl-L-homocysteine + H(+). Specifically methylates the guanine in position 2445 (m2G2445) and the guanine in position 2069 (m7G2069) of 23S rRNA. The protein is Ribosomal RNA large subunit methyltransferase K/L of Pseudomonas savastanoi pv. phaseolicola (strain 1448A / Race 6) (Pseudomonas syringae pv. phaseolicola (strain 1448A / Race 6)).